Here is a 1585-residue protein sequence, read N- to C-terminus: uncharacterized protein (1585 aa).

Residues 12–59 (DKISRKLRMIQGNAERLKRAANGPLIFEAEDRTERVMRQIDRSANRLT) adopt a coiled-coil conformation. 2 disordered regions span residues 586 to 627 (PKRT…SLPR) and 645 to 692 (IRRR…NPTR). A compositionally biased stretch (polar residues) spans 618–627 (TATGPTSLPR). Residues 645–655 (IRRRRGKRVLG) show a composition bias toward basic residues. Polar residues predominate over residues 661-672 (NRMNPSDSSIAV). A phosphoserine mark is found at serine 970 and serine 972.

To B.subtilis XkdO.

This is an uncharacterized protein from Bacillus subtilis (strain 168).